The primary structure comprises 335 residues: tRNA (guanine(6)-N2)-methyltransferase (335 aa).

The THUMP domain maps to 47–150; sequence EALGLRLAHH…GEEAFLGVQL (104 aa). S-adenosyl-L-methionine contacts are provided by residues 195–197, 243–244, and Asn260; these read SGT and DA.

This sequence belongs to the methyltransferase superfamily. Monomer in solution.

It is found in the cytoplasm. The catalysed reaction is guanosine(6) in tRNA + S-adenosyl-L-methionine = N(2)-methylguanosine(6) in tRNA + S-adenosyl-L-homocysteine + H(+). In terms of biological role, S-adenosyl-L-methionine-dependent methyltransferase that catalyzes the methylation of the guanosine nucleotide at position 6 (m2G6) in tRNA(Phe). This Thermus thermophilus (strain ATCC BAA-163 / DSM 7039 / HB27) protein is tRNA (guanine(6)-N2)-methyltransferase.